The following is a 250-amino-acid chain: Precorrin-4 C(11)-methyltransferase (250 aa).

Belongs to the precorrin methyltransferase family.

It catalyses the reaction precorrin-4 + S-adenosyl-L-methionine = precorrin-5 + S-adenosyl-L-homocysteine. It functions in the pathway cofactor biosynthesis; adenosylcobalamin biosynthesis; cob(II)yrinate a,c-diamide from precorrin-2 (aerobic route): step 4/10. Catalyzes the methylation of C-11 in precorrin-4 to form precorrin-5. This Pseudomonas aeruginosa (strain ATCC 15692 / DSM 22644 / CIP 104116 / JCM 14847 / LMG 12228 / 1C / PRS 101 / PAO1) protein is Precorrin-4 C(11)-methyltransferase (cobM).